An 80-amino-acid polypeptide reads, in one-letter code: UPF0180 protein GK1051 (80 aa).

This sequence belongs to the UPF0180 family.

This chain is UPF0180 protein GK1051, found in Geobacillus kaustophilus (strain HTA426).